We begin with the raw amino-acid sequence, 562 residues long: MTAVASTSGKQDADHNQSIECPRFSRGQKEILLDHEDAKGKDSIINSPVSGRQSISPTLSNATTTTTKSIMNATGTSGAVVSNTPEPGLKRVPAVTFSDLKQQQKQDSLTQLKNDSERTKSPNSNPAPVSNSIPGNHAVIPNHTNTSRTTQLSGSPLVNEMKDYDPKKKDSALKIVDTMKPDKIMATSTPISRENNKVTAKAPTSITLRKEDAQDQANNVSGQINVRSTPEETPVKQSVIPSIIPKRENSKNLDPRLPQDDGKLHVLFGATGSLSVFKIKPMIKKLEEIYGRDRISIQVILTQSATQFFEQRYTKKIIKSSEKLNKMSQYESTPATPVTPTPGQCNMAQVVELPPHIQLWTDQDEWDAWKQRTDPVLHIELRRWADILVVAPLTANTLSKIALGLCDNLLTSVIRAWNPSYPILLAPSMVSSTFNSMMTKKQLQTIKEEMSWVTVFKPSEKVMDINGDIGLGGMMDWNEIVNKIVMKLGGYPKNNEEEDDDEDEEEDDDEEEDTEDKNENNNDDDDDDDDDDDDDDDDDDDDDDDDEDEDEAETPGIIDKHQ.

A compositionally biased stretch (polar residues) spans 1–10 (MTAVASTSGK). 3 disordered regions span residues 1-63 (MTAV…SNAT), 97-165 (FSDL…KDYD), and 490-562 (GYPK…DKHQ). A compositionally biased stretch (basic and acidic residues) spans 27 to 42 (GQKEILLDHEDAKGKD). 2 stretches are compositionally biased toward polar residues: residues 44 to 63 (IINS…SNAT) and 99 to 113 (DLKQ…TQLK). Phosphoserine occurs at positions 47, 50, 54, and 56. Over residues 121–134 (SPNSNPAPVSNSIP) the composition is skewed to low complexity. Over residues 142-156 (NHTNTSRTTQLSGSP) the composition is skewed to polar residues. Ser-155 carries the phosphoserine modification. The segment covering 496 to 553 (EEEDDDEDEEEDDDEEEDTEDKNENNNDDDDDDDDDDDDDDDDDDDDDDDDEDEDEAE) has biased composition (acidic residues).

It belongs to the HFCD (homooligomeric flavin containing Cys decarboxylase) superfamily. Interacts with the C-terminal domain of PPZ1. Component of the phosphopantothenoylcysteine decarboxylase (PPCDC) complex, a heterotrimer composed of CAB3, SIS2 and VHS3.

Its subcellular location is the nucleus. It is found in the cytoplasm. Functionally, component of the phosphopantothenoylcysteine decarboxylase (PPCDC) involved in the coenzyme A synthesis. Acts as an inhibitory subunit of protein phosphatase PPZ1, which is involved in many cellular processes such as G1-S transition or salt tolerance. Also modulates the expression of the ENA1 ATPase. This is Phosphopantothenoylcysteine decarboxylase subunit SIS2 (SIS2) from Saccharomyces cerevisiae (strain ATCC 204508 / S288c) (Baker's yeast).